The primary structure comprises 3680 residues: MLWWEEVEDCYEREDVQKKTFTKWVNAQFSKFGKQHIENLFSDLQDGRRLLDLLEGLTGQKLPKEKGSTRVHALNNVNKALRVLQKNNVDLVNIGSTDIVDGNHKLTLGLIWNIILHWQVKNVMKNIMAGLQQTNSEKILLSWVRQSTRNYPQVNVINFTTSWSDGLALNALIHSHRPDLFDWNSVVCQQSATQRLEHAFNIAKYQLGIEKLLDPEDVATTYPDKKSILMYITSLFQVLPQQVSIEAIQEVEMLPRPSQVTREEHFQIHHQMHYSQQITVSLAQGYERAPSFPKPRFKSYAYTQAAYVTTSDPTRSPLPSQHLETPEDKSFGRSLTETEANLDSYQTALEEVLSWLLSAEDALQAQGEISNDVEEVKEQFHTHEGYMMDLTSHQGRVGNVLQLGSQLIGTGKLSEDEETEVQEQMNLLNSRWECLRVASMEKQSNLHKVLMDLQNQQLKELNDWLTKTEERTRKMEKEPLGPDIEDLKRQVQQHKVLQEDLEQEQVRVNSLTHMVVVVDESSGDHATAALEEQLKVLGDRWANICRWTEDRWVLLQDILLKWQRFTEEQCLFSAWLSEKEDAVNKIHTTGFKDQSEVLSNLQKLAVLKTDLEKKKQTMDKLCSLNQDLLSALKNTVVAHKMEAWLDNFAQRWDNLVQKLEKSSAQISQAVTTTQPSLTQTTVMETVTMVTTREHILVKHAQEELPPPPPQKKRQIIVDSEIRKRLDVDITELHSWITRSEAVLQSPEFAIYRKEGNFSDLKEKVNAIEREKAEKFRKLQDASRSAQALVEQMVNEGVNADSIKQASEQLNSRWIEFCQLLSERLNWLEYQNNIITFYNQLQQLEQMTTTAENWLKTQPTTTSEPTAIKSQLKICKDEINRLSALQPQIERLKIQSIALKEKGQGPMFLDADFVAFTNHFNQVFADVQAREKELQTIFDSLPPMRYQETMSTILTWIQQSETKLSIPQVTVTEYDIMEQRLGELQALQSSLQEQQNGLNYLSTTVKEMSKKAPLSDISRKYQSEFEEIEGRWKKLSSQLVEHCQKLEEQMAKLRKIQNHIKTLKKWITEVDVFLKEEWPALGDSEILKRQLKQCRLLVNDIQTIQPSLNSVNEGAQKMKNEAEPEFAGRLETELRELNTQWDYMCRQVYARKEALKGGLDKTVSLQKDLSEMHEWMTQAEEEYLERDFEYKTPDELQTAVEEMKRAKEEAQQKEAKVKLLTESVNSVIAQAPPAAQEALKKELDTLTTNYQWLCTRLNGKCKTLEEVWACWHELLSYLEKANKWLSEVEVKLKTTENISGGAEEIAEVLDSLENLMQHSEDNPNQIRILAQTLTDGGVMDELINEELETFNSRWRELHEEAVRRQKLLEQSIQSAQEIEKSLHLIQESLSSIDKQLAAYIADKVDAAQMPQEAQKIQSDLTSHEISLEEMKKHNQGKETAQRVLSQIDVAQKKLQDVSMKFRLFQKPANFEQRLQESKMILDEVKMHLPALETKSVEQEVVQSQLNHCVNLYKSLSEVKSEVEMVIKTGRQIVQKKQTENPKELDERVTALKLHYNELGAKVTERKQQLEKCLKLSRKMRKEMNALTEWLAATDMELTKRSAVEGMPSNLDSEVAWGKATQKEIEKQKVHLKSVTEVGEALKTVLGKKEMLVEDKLSLLNSNWIAVTSRAEEWLNLLLEYQKHMETFDQNVDYITNWIIQADALLDESEKKKPQQKEDILKRLKAEMNDIRPKVDSTRDQAANLMANRGDHCRKVVEPKISELNHRFAAISHRIKTGKASIPLKELEQFNSDIQKLLEPLEAEIQQGVNLKEEDFNKDMSEDNEGTVKELLQRGDNLQQRITDERKREEIKIKQQLLQTKHNALKDLRSQRRKKALEISHQWYQYKRQADDLLKCLDDIEKKLASLPEPRDERKIKEIDRELQKKKEELNAVRRQAEGLSEDGAAMAVEPTQIQLSKRWREIESKFAQFRRLNFAQIHTVHEESVVAMTEDMPLEISYVPSTYLTEITHVSQALSEVEELLNAPDLCAQDFEDLFKQEESLKNIKDSLQQISGRIDIIHNKKTAALHSATPAERAKLQEALSRLDFQWERVNNMYKDRQGRFDRSVEKWRRFHYDMKILNQWLTEAEQFLKKTQIPENWEHAKYKWYLKELQDGIGQRQSVVRVLNATGEEIIQQSSKTDASILQEKLGSLNLRWQEVCKQLAERKKRLEEQKNILSEFQRDVNEFVLWLEEADNVANIPLEPGNEQQLKEKLEQVKLLAEELPLRQGILKQLNETGGTVLVSAPLSPEEQDKLENKLKQTNLQWIKVSRNLPEKQEEIEAHVKDLGQLEEQLNHLLLWLSPIRNQLEIYNQPNQTGPFDIKEIEVAVQAKQPDVEGILSKGQHLYKEKPATQPAKRKLEDLSSDWKVVTQLLQELRAKQPGPAPGLTTVRAPPSQTVTLVTQPAVTKETAISKLEMPSSLLLEVPALADFNRAWTELTDWLSLLDRVIKSQRVMVGDLEDINEMIIKQKATLQDLEQRRPQLEELITAAQNLKNKTSNQEARTIITDRIERIQSQWDEVQEHLQNRRLQLTEMLKDSTQWLEAKEEAEQVLGQARAKLESWKEAPYTVDAIQKKITETKQLAKDLRQWQINVDVANDLALKLLRDYSADDTRKVHMITENINASWASIHKRLSEREAALEETHRLLQQFPLDLEKFLAWLTEAETTANVLQDATHKERLLEDSKGVRELMKQWQDLQGEIEAHTDIYHNLDENGQKVLRSLEGSDDAALLQRRLDNMNFKWSELRKKSLNIRSHLEASSDQWKRLHLSLQELLVWLQLKDDELSRQAPIGGDFPAVQKQNDVHRAFKRELKTKEPVIMSTLETVRIFLTEQPLEGLEKLYQEPRELPPEERAQNVTRLLRKQAEEVNTQWEKLNVHSADWQRKIDEALERLQELQEATDELDLKLRQAEVIKGSWQPVGDLLIDSLQDHLEKVKALRGEITPLKENVSYVNDLARQLTTLGIQLSPYNLNTLEDLNTRWKLLQVAIEDRIRQLHEAHRDFGPASQHFLSTSVQGPWERAISPNKVPYYINHETQTTCWDHPKMTELYQSLADLNNVRFSAYRTAMKLRRLQKALCLDLLSLSAACDALDQHNLKQNDQPMDILQVINCLTTIYDRLEQEHNNLVNVPLCVDMCLNWLLNVYDTGRTGRIRVLSFKTGIISLCKAHLEDKYRYLFKQVASSTGFCDQRRLGLLLHDSIQIPRQLGEVASFGGSNIEPSVRSCFQFANNKPEIEAALFLDWMRLEPQSMVWLPVLHRVAAAETAKHQAKCNICKECPIIGFRYRSLKHFNYDICQSCFFSGRVAKGHKMHYPMVEYCTPTTSGEDVRDFAKVLKNKFRTKRYFAKHPRMGYLPVQTVLEGDNMETPVTLINFWPVDSAPASSPQLSHDDTHSRIEHYASRLKKMENSNGSYLNDSISPNESIDDEHLLIQHYWRSLNQESPLSQPRSPAQILISLESEERGELERILADLEGRNRNLQAEYDRLKQQHEHKGLSPLPSPPEMMPTSPQSPRDAELIAEAKLLRQHKGRLEARMQILEDHNKQLESQLHRLRQLLEQPQAEAKVNGTTVSSPSTSLQRSDSSQPMLLRVVGSQTSESMGEEDLLSPPQDTSTGLEEVMEQLNHSFPSSRGRNTPGKPMREDTM.

The actin-binding stretch occupies residues 1-237 (MLWWEEVEDC…ILMYITSLFQ (237 aa)). Calponin-homology (CH) domains follow at residues 15 to 119 (DVQK…LHWQ) and 134 to 240 (TNSE…QVLP). Residues 63–72 (PKEKGSTRVH) are ANK2- and ANK-3 binding. Over residues 310 to 323 (TSDPTRSPLPSQHL) the composition is skewed to polar residues. A disordered region spans residues 310–332 (TSDPTRSPLPSQHLETPEDKSFG). 24 Spectrin repeats span residues 340-448 (ANLD…NLHK), 449-557 (VLMD…LLQD), 560-668 (LKWQ…QISQ), 720-829 (EIRK…WLEY), 831-935 (NNII…ELQT), 944-1047 (RYQE…KLEE), 1050-1156 (AKLR…ALKG), 1159-1265 (DKTV…TLEE), 1268-1369 (ACWH…LLEQ), 1370-1465 (SIQS…LFQK), 1470-1570 (EQRL…QLEK), 1573-1678 (KLSR…LLLE), 1681-1780 (KHME…KASI), 1781-1876 (PLKE…KALE), 1879-1981 (HQWY…TVHE), 1994-2103 (EISY…RFDR), 2106-2210 (EKWR…RLEE), 2213-2320 (NILS…EIEA), 2321-2418 (HVKD…LRAK), 2470-2572 (FNRA…QLTE), 2575-2681 (KDST…ALEE), 2684-2797 (RLLQ…HLEA), 2803-2925 (KRLH…RKID), and 2930-3035 (RLQE…QLHE). The interval 1418 to 1915 (DLTSHEISLE…PEPRDERKIK (498 aa)) is interaction with SYNM. In terms of domain architecture, WW spans 3050–3083 (TSVQGPWERAISPNKVPYYINHETQTTCWDHPKM). The interval 3053-3403 (QGPWERAISP…TVLEGDNMET (351 aa)) is interaction with SYNM. The ZZ-type; degenerate zinc finger occupies 3303–3359 (KHQAKCNICKECPIIGFRYRSLKHFNYDICQSCFFSGRVAKGHKMHYPMVEYCTPTT). Residues C3308, C3311, C3332, and C3335 each contribute to the Zn(2+) site. Residues 3461–3513 (DDEHLLIQHYWRSLNQESPLSQPRSPAQILISLESEERGELERILADLEGRNR) are binds to SNTB1. Phosphoserine occurs at positions 3478, 3485, and 3495. Disordered stretches follow at residues 3524–3549 (QQHE…QSPR) and 3595–3680 (PQAE…EDTM). 2 stretches are compositionally biased toward polar residues: residues 3602 to 3621 (NGTT…SSQP) and 3658 to 3668 (LNHSFPSSRGR). A phosphoserine mark is found at S3607, S3608, S3612, S3618, S3619, and S3661.

In terms of assembly, interacts with SYNM. Interacts with the syntrophins SNTG1 and SNTG2. Interacts with KRT19. Component of the dystrophin-associated glycoprotein complex which is composed of three subcomplexes: a cytoplasmic complex comprised of DMD (or UTRN), DTNA and a number of syntrophins, such as SNTB1, SNTB2, SNTG1 and SNTG2, the transmembrane dystroglycan complex, and the sarcoglycan-sarcospan complex. Interacts with DAG1 (betaDAG1) with DMD; the interaction is inhibited by phosphorylation on the PPXY motif of DAG1. Interacts with SYNM; SNTA1 and SNTB1. Interacts with CMYA5. Directly interacts with ANK2 and ANK3; these interactions do not interfere with betaDAG1-binding and are necessary for proper localization in muscle cells. Identified in a dystroglycan complex that contains at least PRX, DRP2, UTRN, DMD and DAG1. Interacts with DTNB. Interacts with PGM5; the interaction is direct. Interacts with NOS1; localizes NOS1 to sarcolemma in muscle cells.

Its subcellular location is the cell membrane. It is found in the sarcolemma. The protein resides in the cytoplasm. The protein localises to the cytoskeleton. It localises to the postsynaptic cell membrane. Its function is as follows. Anchors the extracellular matrix to the cytoskeleton via F-actin. Ligand for dystroglycan. Component of the dystrophin-associated glycoprotein complex which accumulates at the neuromuscular junction (NMJ) and at a variety of synapses in the peripheral and central nervous systems and has a structural function in stabilizing the sarcolemma. Also implicated in signaling events and synaptic transmission. The polypeptide is Dystrophin (DMD) (Canis lupus familiaris (Dog)).